The chain runs to 524 residues: GMP synthase [glutamine-hydrolyzing] (524 aa).

In terms of domain architecture, Glutamine amidotransferase type-1 spans 12 to 201; sequence TILVLDFGSQ…AVDICKASQS (190 aa). The Nucleophile role is filled by cysteine 88. Residues histidine 175 and glutamate 177 contribute to the active site. The GMPS ATP-PPase domain maps to 202–399; the sequence is WNMENFIDTE…LGISHELVWR (198 aa). 230-236 contributes to the ATP binding site; sequence SGGVDST. Arginine 303, aspartate 461, lysine 516, and glutamate 522 together coordinate XMP.

In terms of assembly, homodimer. It depends on Mg(2+) as a cofactor.

It is found in the cytoplasm. Its subcellular location is the cytosol. The enzyme catalyses XMP + L-glutamine + ATP + H2O = GMP + L-glutamate + AMP + diphosphate + 2 H(+). It participates in purine metabolism; GMP biosynthesis; GMP from XMP (L-Gln route): step 1/1. In terms of biological role, catalyzes the conversion of xanthine monophosphate (XMP) to GMP in the presence of glutamine and ATP through an adenyl-XMP intermediate. This Kluyveromyces lactis (strain ATCC 8585 / CBS 2359 / DSM 70799 / NBRC 1267 / NRRL Y-1140 / WM37) (Yeast) protein is GMP synthase [glutamine-hydrolyzing] (GUA1).